Consider the following 203-residue polypeptide: A-type ATP synthase subunit E (203 aa).

It belongs to the V-ATPase E subunit family. In terms of assembly, has multiple subunits with at least A(3), B(3), C, D, E, F, H, I and proteolipid K(x).

The protein resides in the cell membrane. Component of the A-type ATP synthase that produces ATP from ADP in the presence of a proton gradient across the membrane. This Methanococcus maripaludis (strain DSM 14266 / JCM 13030 / NBRC 101832 / S2 / LL) protein is A-type ATP synthase subunit E.